The primary structure comprises 1484 residues: Cystic fibrosis transmembrane conductance regulator (1484 aa).

Residues 1–77 are Cytoplasmic-facing; it reads MQRSPLEKAS…KLINALRRCF (77 aa). Residues 78 to 98 traverse the membrane as a helical segment; the sequence is FWRFMFYGIILYLGEVTKSVQ. The ABC transmembrane type-1 1 domain occupies 81–365; the sequence is FMFYGIILYL…WAVQTWYDSL (285 aa). Topologically, residues 99 to 122 are extracellular; it reads PLLLGRIIASYDPDNKEERSIAIY. The chain crosses the membrane as a helical span at residues 123–146; the sequence is LGIGLCLLFVMRTLLLHPAIFGLH. Over 147–195 the chain is Cytoplasmic; the sequence is RIGMQMRIAMFSLIYKKTLKLSSRVLDKISIGQLVSLLSNNLNKFDEGL. The helical transmembrane segment at 196–216 threads the bilayer; that stretch reads ALAHFVWIAPLQVTLLMGLLW. Topologically, residues 217–222 are extracellular; it reads DLLQAS. A helical membrane pass occupies residues 223 to 243; it reads AFCGLAFLIVLALFQAGLGRM. The Cytoplasmic portion of the chain corresponds to 244–298; that stretch reads MMKYRDQRAGKINERLVITSEMIENIQSVKAYCWEEAMEKMIESIRQTELKLTRK. A helical membrane pass occupies residues 299-319; sequence AAYVRYFNSSAFFFSGFFVVF. The Extracellular segment spans residues 320 to 339; sequence LSVLPYALIKTIVLRKIFTT. Residues 340–358 form a helical membrane-spanning segment; that stretch reads ISFCIVLRMAVTRQFPWAV. Topologically, residues 359–860 are cytoplasmic; it reads QTWYDSLGAI…YLRYVTIHKS (502 aa). Residues W401, S434, 458-465, and Q493 each bind ATP; that span reads GSTGAGKT. One can recognise an ABC transporter 1 domain in the interval 423-646; the sequence is NADNSLFFSN…RPDFSSKLMG (224 aa). The S-palmitoyl cysteine moiety is linked to residue C524. Residues S549 and S660 each carry the phosphoserine modification. A disordered R region region spans residues 654–833; sequence SAERRNSIIT…EEINEEDLKE (180 aa). S670 is modified (phosphoserine; by PKA). Position 686 is a phosphoserine (S686). A Glycyl lysine isopeptide (Lys-Gly) (interchain with G-Cter in ubiquitin) cross-link involves residue K688. A phosphoserine mark is found at S700 and S712. Phosphothreonine is present on T717. S737, S769, S792, S797, and S815 each carry phosphoserine. A helical membrane pass occupies residues 861-881; the sequence is LVFVLIWCLVIFLAEVAISLV. An ABC transmembrane type-1 2 domain is found at 861-1157; it reads LVFVLIWCLV…AVNSSIDVDS (297 aa). At 882–920 the chain is on the extracellular side; it reads VLWLLKKTASQDKGNSTQSINSSYTVIFTSTSTYYVFYI. 2 N-linked (GlcNAc...) asparagine glycosylation sites follow: N896 and N902. A discontinuously helical membrane pass occupies residues 921-941; the sequence is YVGVADTLLALGFFRGLPLVH. Topologically, residues 942-992 are cytoplasmic; sequence TLITVSKILHHKMLHAVLQAPMSTLNALKAGGILNRFSKDIAILDDLLPLT. Residues 993 to 1013 traverse the membrane as a helical segment; sequence IFDFVQLLLIVIGAVTVVSAL. The Extracellular portion of the chain corresponds to 1014 to 1015; sequence QP. Residues 1016-1036 form a helical membrane-spanning segment; it reads YIFLATVPVIAAFIMLRAYFL. The Cytoplasmic portion of the chain corresponds to 1037–1097; it reads HTSQQLKQLE…TANWFLYLST (61 aa). A helical membrane pass occupies residues 1098 to 1118; that stretch reads LRWFQMRMEIIFVIFFIAITF. Topologically, residues 1119-1132 are extracellular; it reads ISILTTGEGVGAVG. The chain crosses the membrane as a helical span at residues 1133–1153; the sequence is IILTLAMNIMGTLQWAVNSSI. Over 1154 to 1484 the chain is Cytoplasmic; that stretch reads DVDSLMRSVS…TEEEVQETRL (331 aa). The region spanning 1214 to 1447 is the ABC transporter 2 domain; that stretch reads MTVKDLTAKY…KSLFRQAISP (234 aa). Residues Y1223 and 1248–1255 each bind ATP; that span reads GRTGSGKS. Positions 1390–1484 are interaction with GORASP2; that stretch reads RTLKQAFADC…TEEEVQETRL (95 aa). Residue C1399 is the site of S-palmitoyl cysteine attachment. Phosphoserine is present on residues S1448 and S1460. A compositionally biased stretch (basic residues) spans 1456–1465; sequence HRNSSKHKSR. The tract at residues 1456–1484 is disordered; it reads HRNSSKHKSRSQIAALKEETEEEVQETRL. Over residues 1474 to 1484 the composition is skewed to acidic residues; sequence ETEEEVQETRL. The short motif at 1482-1484 is the PDZ-binding element; that stretch reads TRL.

It belongs to the ABC transporter superfamily. ABCC family. CFTR transporter (TC 3.A.1.202) subfamily. As to quaternary structure, monomer; does not require oligomerization for channel activity. May form oligomers in the membrane. Interacts with SLC26A3, SLC26A6 and NHERF1. Interacts with SHANK2. Interacts with MYO6. Interacts (via C-terminus) with GOPC (via PDZ domain); this promotes CFTR internalization and thereby decreases channel activity. Interacts with SLC4A7 through NHERF1. Found in a complex with MYO5B and RAB11A. Interacts with ANO1. Interacts with SLC26A8. Interacts with AHCYL1; the interaction increases CFTR activity. Interacts with CSE1L. The core-glycosylated form interacts with GORASP2 (via PDZ GRASP-type 1 domain) in respone to ER stress. Interacts with MARCHF2; the interaction leads to CFTR ubiqtuitination and degradation. Interacts with ADGRG2. Post-translationally, N-glycosylated. Phosphorylated; cAMP treatment promotes phosphorylation and activates the channel. Dephosphorylation decreases the ATPase activity (in vitro). Phosphorylation at PKA sites activates the channel. Phosphorylation at PKC sites enhances the response to phosphorylation by PKA. Phosphorylated by AMPK; this inhibits channel activity. In terms of processing, ubiquitinated, leading to its degradation in the lysosome. Deubiquitination by USP10 in early endosomes enhances its endocytic recycling to the cell membrane. Ubiquitinated by RNF185 during ER stress. Ubiquitinated by MARCHF2.

It is found in the apical cell membrane. The protein localises to the early endosome membrane. The protein resides in the cell membrane. Its subcellular location is the recycling endosome membrane. It localises to the endoplasmic reticulum membrane. It is found in the nucleus. It catalyses the reaction ATP + H2O + closed Cl(-) channel = ADP + phosphate + open Cl(-) channel.. The enzyme catalyses chloride(in) = chloride(out). It carries out the reaction hydrogencarbonate(in) = hydrogencarbonate(out). The catalysed reaction is ATP + H2O = ADP + phosphate + H(+). In terms of biological role, epithelial ion channel that plays an important role in the regulation of epithelial ion and water transport and fluid homeostasis. Mediates the transport of chloride ions across the cell membrane. Possesses an intrinsic ATPase activity and utilizes ATP to gate its channel; the passive flow of anions through the channel is gated by cycles of ATP binding and hydrolysis by the ATP-binding domains. The ion channel is also permeable to HCO(3)(-); selectivity depends on the extracellular chloride concentration. Exerts its function also by modulating the activity of other ion channels and transporters. Contributes to the regulation of the pH and the ion content of the epithelial fluid layer. Modulates the activity of the epithelial sodium channel (ENaC) complex, in part by regulating the cell surface expression of the ENaC complex. May regulate bicarbonate secretion and salvage in epithelial cells by regulating the transporter SLC4A7. Can inhibit the chloride channel activity of ANO1. Plays a role in the chloride and bicarbonate homeostasis during sperm epididymal maturation and capacitation. The chain is Cystic fibrosis transmembrane conductance regulator from Mustela putorius furo (European domestic ferret).